A 103-amino-acid polypeptide reads, in one-letter code: Hexon-interlacing protein (103 aa).

Residues 72–99 (LDELKIQVAAMQNSVTAIQREVNDLKQR) are a coiled coil.

The protein belongs to the adenoviridae hexon-interlacing protein family. As to quaternary structure, homotrimer. Interacts with hexon protein; this interaction tethers the hexons together. Self-interacts with adjacent proteins. Interacts with kinesin light chain KLC1; this interaction leads to capsid disruption at the nuclear pore complex during virus entry into host cell.

The protein localises to the virion. The protein resides in the host nucleus. Its function is as follows. Structural component of the virion that acts as a cement protein on the capsid exterior and forms triskelion structures consisting of three molecules that stabilize three hexon trimers at the center of each icosahedral facet and fixes the peripentonal hexons. Dispensable for assembly. During virus entry, recruits the anterograde motor kinesin-1 to the capsid docked at the nuclear pore complex thereby subjecting the docked capsid to a pulling force. The resulting tension leads to capsid disruption, dispersion of capsid fragments toward cell periphery and eventually viral DNA entry into the host nucleus. This chain is Hexon-interlacing protein, found in Canis lupus familiaris (Dog).